The following is a 99-amino-acid chain: Translation initiation factor 1A (99 aa).

In terms of domain architecture, S1-like spans 11–84; the sequence is RRVRTPRRGE…EKADIVWRYT (74 aa).

Belongs to the eIF-1A family.

Functionally, seems to be required for maximal rate of protein biosynthesis. Enhances ribosome dissociation into subunits and stabilizes the binding of the initiator Met-tRNA(I) to 40 S ribosomal subunits. The chain is Translation initiation factor 1A (eIF1A) from Methanothermobacter thermautotrophicus (strain ATCC 29096 / DSM 1053 / JCM 10044 / NBRC 100330 / Delta H) (Methanobacterium thermoautotrophicum).